A 325-amino-acid polypeptide reads, in one-letter code: Helicase VP6-A (325 aa).

Disordered regions lie at residues methionine 1–glycine 122 and aspartate 185–arginine 230. Composition is skewed to basic and acidic residues over residues valine 8–glutamine 18, glutamate 32–glutamate 54, glycine 61–isoleucine 79, and leucine 92–glycine 105. Lysine 106 provides a ligand contact to ATP. Residues lysine 106–glycine 122 are compositionally biased toward gly residues. 2 stretches are compositionally biased toward basic and acidic residues: residues aspartate 185–glycine 203 and histidine 211–alanine 229.

The protein belongs to the orbivirus VP6 family. Homohexamer.

Its subcellular location is the virion. It carries out the reaction ATP + H2O = ADP + phosphate + H(+). Its function is as follows. ATP dependent RNA helicase essential for RNA packaging and viral transcription. Possesses ss- and dsRNA-binding capacity. The chain is Helicase VP6-A (Segment-9) from Bluetongue virus 17 (isolate USA) (BTV 17).